The chain runs to 284 residues: Bifunctional protein FolD 1 (284 aa).

Residues 166-168 (GAS), Ser-191, and Ile-232 contribute to the NADP(+) site.

It belongs to the tetrahydrofolate dehydrogenase/cyclohydrolase family. Homodimer.

It carries out the reaction (6R)-5,10-methylene-5,6,7,8-tetrahydrofolate + NADP(+) = (6R)-5,10-methenyltetrahydrofolate + NADPH. The enzyme catalyses (6R)-5,10-methenyltetrahydrofolate + H2O = (6R)-10-formyltetrahydrofolate + H(+). Its pathway is one-carbon metabolism; tetrahydrofolate interconversion. Its function is as follows. Catalyzes the oxidation of 5,10-methylenetetrahydrofolate to 5,10-methenyltetrahydrofolate and then the hydrolysis of 5,10-methenyltetrahydrofolate to 10-formyltetrahydrofolate. This Hydrogenovibrio crunogenus (strain DSM 25203 / XCL-2) (Thiomicrospira crunogena) protein is Bifunctional protein FolD 1.